We begin with the raw amino-acid sequence, 231 residues long: 5'-methylthioadenosine/S-adenosylhomocysteine nucleosidase (231 aa).

Glu12 (proton acceptor) is an active-site residue. Substrate-binding positions include Gly78, Met153, and 174 to 175 (ME). The active-site Proton donor is the Asp198.

This sequence belongs to the PNP/UDP phosphorylase family. MtnN subfamily.

It catalyses the reaction S-adenosyl-L-homocysteine + H2O = S-(5-deoxy-D-ribos-5-yl)-L-homocysteine + adenine. The catalysed reaction is S-methyl-5'-thioadenosine + H2O = 5-(methylsulfanyl)-D-ribose + adenine. The enzyme catalyses 5'-deoxyadenosine + H2O = 5-deoxy-D-ribose + adenine. It functions in the pathway amino-acid biosynthesis; L-methionine biosynthesis via salvage pathway; S-methyl-5-thio-alpha-D-ribose 1-phosphate from S-methyl-5'-thioadenosine (hydrolase route): step 1/2. In terms of biological role, catalyzes the irreversible cleavage of the glycosidic bond in both 5'-methylthioadenosine (MTA) and S-adenosylhomocysteine (SAH/AdoHcy) to adenine and the corresponding thioribose, 5'-methylthioribose and S-ribosylhomocysteine, respectively. Also cleaves 5'-deoxyadenosine, a toxic by-product of radical S-adenosylmethionine (SAM) enzymes, into 5-deoxyribose and adenine. The sequence is that of 5'-methylthioadenosine/S-adenosylhomocysteine nucleosidase from Psychromonas ingrahamii (strain DSM 17664 / CCUG 51855 / 37).